The following is a 240-amino-acid chain: 1-(5-phosphoribosyl)-5-[(5-phosphoribosylamino)methylideneamino] imidazole-4-carboxamide isomerase (240 aa).

The active-site Proton acceptor is the aspartate 8. The active-site Proton donor is aspartate 129.

This sequence belongs to the HisA/HisF family.

It is found in the cytoplasm. It catalyses the reaction 1-(5-phospho-beta-D-ribosyl)-5-[(5-phospho-beta-D-ribosylamino)methylideneamino]imidazole-4-carboxamide = 5-[(5-phospho-1-deoxy-D-ribulos-1-ylimino)methylamino]-1-(5-phospho-beta-D-ribosyl)imidazole-4-carboxamide. It participates in amino-acid biosynthesis; L-histidine biosynthesis; L-histidine from 5-phospho-alpha-D-ribose 1-diphosphate: step 4/9. In Listeria monocytogenes serotype 4b (strain CLIP80459), this protein is 1-(5-phosphoribosyl)-5-[(5-phosphoribosylamino)methylideneamino] imidazole-4-carboxamide isomerase.